A 229-amino-acid chain; its full sequence is Potassium/proton antiporter CemA (229 aa).

Helical transmembrane passes span 7–27, 114–134, 154–174, and 189–209; these read FTPL…SLSF, LICF…LLIL, ILLL…ELMI, and IISG…KYWI.

Belongs to the CemA family.

It is found in the plastid. The protein resides in the chloroplast inner membrane. It carries out the reaction K(+)(in) + H(+)(out) = K(+)(out) + H(+)(in). In terms of biological role, contributes to K(+)/H(+) antiport activity by supporting proton efflux to control proton extrusion and homeostasis in chloroplasts in a light-dependent manner to modulate photosynthesis. Prevents excessive induction of non-photochemical quenching (NPQ) under continuous-light conditions. Indirectly promotes efficient inorganic carbon uptake into chloroplasts. The sequence is that of Potassium/proton antiporter CemA from Gossypium barbadense (Sea Island cotton).